Reading from the N-terminus, the 223-residue chain is Glycerol-3-phosphate acyltransferase (223 aa).

The next 5 helical transmembrane spans lie at 2–22, 52–72, 78–98, 112–132, and 153–173; these read LEIL…GLVI, WGVA…WLAF, PVFV…SCFM, IFLP…MLVI, and LAVS…AVVV. Residues 191–223 form a disordered region; it reads WLKSKNKGAAAGNAAEGDDTQNMNPQDAGRKDG.

Belongs to the PlsY family. As to quaternary structure, probably interacts with PlsX.

It is found in the cell inner membrane. It catalyses the reaction an acyl phosphate + sn-glycerol 3-phosphate = a 1-acyl-sn-glycero-3-phosphate + phosphate. It participates in lipid metabolism; phospholipid metabolism. Functionally, catalyzes the transfer of an acyl group from acyl-phosphate (acyl-PO(4)) to glycerol-3-phosphate (G3P) to form lysophosphatidic acid (LPA). This enzyme utilizes acyl-phosphate as fatty acyl donor, but not acyl-CoA or acyl-ACP. This is Glycerol-3-phosphate acyltransferase from Desulfovibrio desulfuricans (strain ATCC 27774 / DSM 6949 / MB).